The chain runs to 469 residues: MSDLENKIATDIESYLKEHENKQLLRFITCGSVDDGKSTLIGRLLHDSKMIFEDQLAAIKKDSKKVGTTEGEFDLALLVDGLQSEREQGITIDVAYRYFTTDKRKFIIADTPGHEQYTRNMATGASTADLAIILIDARYGVQTQTRRHSFITKLLGIKHIVVAVNKMDLVDFKEDIFNQISSDYLKFAQELGMTKDITLIPISALNGDNIVKRSEKSPWYKGDTLMNLLETIKIDEDRDLVHFRFPVQYVNRPNLNFRGFCGTIASGVIKVGDAITVLPSGKSSTVKEIVTYDGNLDYAYSQQAITLTLNDEIDISRGDIIVKSDEQPDHASNLDVDIVWMSEEPLIKGKQYFIKRATTVTVGSIDHFYYKTDVNTLEQSEANVLNLNEISRAKLDLEQVIAFDSYDKNKVMGSFIIIDRITNNTVGAGMIRNKSEDQSKKDSIYSDFEIEFNALVRKHFPHWECKEIF.

A tr-type G domain is found at 22–238 (KQLLRFITCG…LETIKIDEDR (217 aa)). The segment at 31 to 38 (GSVDDGKS) is G1. Position 31-38 (31-38 (GSVDDGKS)) interacts with GTP. The interval 89 to 93 (GITID) is G2. The interval 110 to 113 (DTPG) is G3. GTP-binding positions include 110–114 (DTPGH) and 165–168 (NKMD). The segment at 165-168 (NKMD) is G4. A G5 region spans residues 203–205 (SAL).

This sequence belongs to the TRAFAC class translation factor GTPase superfamily. Classic translation factor GTPase family. CysN/NodQ subfamily. In terms of assembly, heterodimer composed of CysD, the smaller subunit, and CysN.

It catalyses the reaction sulfate + ATP + H(+) = adenosine 5'-phosphosulfate + diphosphate. The protein operates within sulfur metabolism; hydrogen sulfide biosynthesis; sulfite from sulfate: step 1/3. With CysD forms the ATP sulfurylase (ATPS) that catalyzes the adenylation of sulfate producing adenosine 5'-phosphosulfate (APS) and diphosphate, the first enzymatic step in sulfur assimilation pathway. APS synthesis involves the formation of a high-energy phosphoric-sulfuric acid anhydride bond driven by GTP hydrolysis by CysN coupled to ATP hydrolysis by CysD. The chain is Sulfate adenylyltransferase subunit 1 from Aliarcobacter butzleri (strain RM4018) (Arcobacter butzleri).